A 289-amino-acid chain; its full sequence is (3R)-3-[(carboxymethyl)amino]fatty acid oxygenase/decarboxylase (289 aa).

A (3R)-3-[(carboxymethyl)amino]fatty acid-binding residues include Y65, Y70, and G93. Fe(2+)-binding residues include H97 and D99. The a (3R)-3-[(carboxymethyl)amino]fatty acid site is built by Y100 and K158. Fe(2+) is bound at residue H260. Residue H264 participates in 2-oxoglutarate binding. Residue R275 participates in a (3R)-3-[(carboxymethyl)amino]fatty acid binding.

This sequence belongs to the TfdA dioxygenase family. The cofactor is Fe(2+).

The enzyme catalyses a (3R)-3-[(carboxymethyl)amino]fatty acid + 2 2-oxoglutarate + 2 O2 = a (3R)-3-isocyanyl-fatty acid + 2 succinate + 3 CO2 + 2 H2O. It catalyses the reaction a (3R)-3-[(carboxymethyl)amino]fatty acid + 2-oxoglutarate + O2 = a (3R)-3-{[carboxy(hydroxy)methyl]amino}fatty acid + succinate + CO2. It carries out the reaction a (3R)-3-{[carboxy(hydroxy)methyl]amino}fatty acid + 2-oxoglutarate + O2 = a (3R)-3-isocyanyl-fatty acid + succinate + 2 CO2 + 2 H2O. Involved in the biosynthesis of a unique class of isonitrile lipopeptides (INLPs) that seem to play a role in metal acquisition in M.marinum. Catalyzes the conversion of (3R)-3-[(carboxymethyl)amino]fatty acids to (3R)-3-isocyanyl-fatty acids through an oxidative decarboxylation mechanism, thereby generating the isonitrile group of INLPs. The chain is (3R)-3-[(carboxymethyl)amino]fatty acid oxygenase/decarboxylase from Mycobacterium marinum (strain ATCC BAA-535 / M).